We begin with the raw amino-acid sequence, 25 residues long: Toxin Tpa3 (25 aa).

This sequence belongs to the non-disulfide-bridged peptide (NDBP) superfamily. In terms of tissue distribution, expressed by the venom gland.

The protein resides in the secreted. Its function is as follows. Unknown. Is not toxic to mammals. The polypeptide is Toxin Tpa3 (Tityus pachyurus (Colombian scorpion)).